A 122-amino-acid chain; its full sequence is Large ribosomal subunit protein uL14 (122 aa).

Belongs to the universal ribosomal protein uL14 family. In terms of assembly, part of the 50S ribosomal subunit. Forms a cluster with proteins L3 and L19. In the 70S ribosome, L14 and L19 interact and together make contacts with the 16S rRNA in bridges B5 and B8.

Its function is as follows. Binds to 23S rRNA. Forms part of two intersubunit bridges in the 70S ribosome. The chain is Large ribosomal subunit protein uL14 from Myxococcus xanthus (strain DK1622).